The following is a 246-amino-acid chain: Azurocidin (246 aa).

A signal peptide spans 1–19 (MPALRFLALLASLLATSRV). A propeptide spanning residues 20-26 (GLATLAD) is cleaved from the precursor. Residues 27-242 (IVGGRRAQPQ…FRNWIDSVLN (216 aa)) form the Peptidase S1 domain. A disulfide bridge links C52 with C68. N139 and N170 each carry an N-linked (GlcNAc...) asparagine glycan. Intrachain disulfides connect C148–C205 and C178–C184. Positions 245–246 (PA) are excised as a propeptide.

This sequence belongs to the peptidase S1 family. Elastase subfamily.

The protein localises to the cytoplasmic granule membrane. In terms of biological role, this is a neutrophil granule-derived antibacterial and monocyte- and fibroblast-specific chemotactic glycoprotein. Binds heparin. In Sus scrofa (Pig), this protein is Azurocidin.